A 602-amino-acid polypeptide reads, in one-letter code: Proteasome-associated ATPase (602 aa).

Positions 1–17 are enriched in low complexity; sequence MSGPRSGSGSDGSTGRP. A disordered region spans residues 1 to 31; the sequence is MSGPRSGSGSDGSTGRPGDAESRRSAYEKET. The segment covering 18 to 31 has biased composition (basic and acidic residues); the sequence is GDAESRRSAYEKET. Residues 19-106 are a coiled coil; that stretch reads DAESRRSAYE…LKEEVDRLAQ (88 aa). 289–294 serves as a coordination point for ATP; it reads GCGKTL. The interval 601-602 is docks into pockets in the proteasome alpha-ring; the sequence is YL.

The protein belongs to the AAA ATPase family. Homohexamer. Assembles into a hexameric ring structure that caps the 20S proteasome core. Strongly interacts with the prokaryotic ubiquitin-like protein Pup through a hydrophobic interface; the interacting region of ARC lies in its N-terminal coiled-coil domain. There is one Pup binding site per ARC hexamer ring. Upon ATP-binding, the C-terminus of ARC interacts with the alpha-rings of the proteasome core, possibly by binding to the intersubunit pockets.

The protein operates within protein degradation; proteasomal Pup-dependent pathway. In terms of biological role, ATPase which is responsible for recognizing, binding, unfolding and translocation of pupylated proteins into the bacterial 20S proteasome core particle. May be essential for opening the gate of the 20S proteasome via an interaction with its C-terminus, thereby allowing substrate entry and access to the site of proteolysis. Thus, the C-termini of the proteasomal ATPase may function like a 'key in a lock' to induce gate opening and therefore regulate proteolysis. The protein is Proteasome-associated ATPase of Frankia casuarinae (strain DSM 45818 / CECT 9043 / HFP020203 / CcI3).